Reading from the N-terminus, the 107-residue chain is U1-lycotoxin-Ls1m (107 aa).

Positions 1–20 are cleaved as a signal peptide; sequence MMKVLVVVALLVTLISYSSS. Residues 21–41 constitute a propeptide that is removed on maturation; sequence EGIDDLEADELLSLMANEQTR. Cystine bridges form between C44/C59, C51/C68, C58/C86, and C70/C84.

The protein belongs to the neurotoxin 19 (CSTX) family. 04 (U1-Lctx) subfamily. In terms of tissue distribution, expressed by the venom gland.

The protein localises to the secreted. The chain is U1-lycotoxin-Ls1m from Lycosa singoriensis (Wolf spider).